The following is a 151-amino-acid chain: Ribonuclease H (151 aa).

Residues 1-141 form the RNase H type-1 domain; it reads MQEVTVYSDG…ADALANKGVE (141 aa). Residues Asp-9, Glu-47, Asp-69, and Asp-133 each coordinate Mg(2+).

It belongs to the RNase H family. In terms of assembly, monomer. Mg(2+) is required as a cofactor.

The protein localises to the cytoplasm. The catalysed reaction is Endonucleolytic cleavage to 5'-phosphomonoester.. Functionally, endonuclease that specifically degrades the RNA of RNA-DNA hybrids. This is Ribonuclease H from Ralstonia nicotianae (strain ATCC BAA-1114 / GMI1000) (Ralstonia solanacearum).